The sequence spans 231 residues: NADH-ubiquinone oxidoreductase chain 4 (231 aa).

A run of 6 helical transmembrane segments spans residues 1 to 21, 34 to 54, 63 to 85, 89 to 111, 128 to 148, and 156 to 176; these read PIAG…YGII, MFLP…LTCL, IAYS…TPWG, AMAL…NTTY, ILPM…ATPP, and LLIM…LGLS.

This sequence belongs to the complex I subunit 4 family.

Its subcellular location is the mitochondrion membrane. The catalysed reaction is a ubiquinone + NADH + 5 H(+)(in) = a ubiquinol + NAD(+) + 4 H(+)(out). Core subunit of the mitochondrial membrane respiratory chain NADH dehydrogenase (Complex I) that is believed to belong to the minimal assembly required for catalysis. Complex I functions in the transfer of electrons from NADH to the respiratory chain. The immediate electron acceptor for the enzyme is believed to be ubiquinone. This chain is NADH-ubiquinone oxidoreductase chain 4 (MT-ND4), found in Bothriechis lateralis (Side-striped palm pitviper).